Here is a 251-residue protein sequence, read N- to C-terminus: Pyrroloquinoline-quinone synthase (251 aa).

Belongs to the PqqC family.

It carries out the reaction 6-(2-amino-2-carboxyethyl)-7,8-dioxo-1,2,3,4,7,8-hexahydroquinoline-2,4-dicarboxylate + 3 O2 = pyrroloquinoline quinone + 2 H2O2 + 2 H2O + H(+). It functions in the pathway cofactor biosynthesis; pyrroloquinoline quinone biosynthesis. Its function is as follows. Ring cyclization and eight-electron oxidation of 3a-(2-amino-2-carboxyethyl)-4,5-dioxo-4,5,6,7,8,9-hexahydroquinoline-7,9-dicarboxylic-acid to PQQ. The chain is Pyrroloquinoline-quinone synthase from Pseudomonas putida (strain GB-1).